A 211-amino-acid chain; its full sequence is Protein-L-isoaspartate O-methyltransferase (211 aa).

Ser62 is an active-site residue.

It belongs to the methyltransferase superfamily. L-isoaspartyl/D-aspartyl protein methyltransferase family.

It localises to the cytoplasm. It catalyses the reaction [protein]-L-isoaspartate + S-adenosyl-L-methionine = [protein]-L-isoaspartate alpha-methyl ester + S-adenosyl-L-homocysteine. Catalyzes the methyl esterification of L-isoaspartyl residues in peptides and proteins that result from spontaneous decomposition of normal L-aspartyl and L-asparaginyl residues. It plays a role in the repair and/or degradation of damaged proteins. The polypeptide is Protein-L-isoaspartate O-methyltransferase (Shewanella denitrificans (strain OS217 / ATCC BAA-1090 / DSM 15013)).